The sequence spans 449 residues: CCAAT/enhancer-binding protein (449 aa).

3 disordered regions span residues 211–233 (HATY…TIKE), 276–302 (GNPL…NGSQ), and 334–386 (SKLH…KAKV). 3 stretches are compositionally biased toward low complexity: residues 215–229 (NNSS…SDSS), 280–301 (NGGN…SNGS), and 339–349 (QQQHQQHQQQQ). A compositionally biased stretch (basic and acidic residues) spans 357 to 368 (KHVDKGTDEYRR). The bZIP domain occupies 363 to 426 (TDEYRRRRER…QLHKQIYMQL (64 aa)). The basic motif stretch occupies residues 367–396 (RRRRERNNIAVRKSREKAKVRSREVEERVK). The leucine-zipper stretch occupies residues 398–405 (LLKEKDAL).

The protein belongs to the bZIP family. C/EBP subfamily. In terms of assembly, binds DNA as a dimer and can form stable heterodimers. Interacts with trbl. Ubiquitination/deubiquitination regulates border cell migration. Ubiquitination is stimulated by trbl, which leads to proteasomal degradation and inhibits border cell migration. Deubiquitination by Usp47, leads to its stabilization and promotes border cell migration.

The protein localises to the nucleus. In terms of biological role, required for the expression of gene products mediating border cell migration. Among the DNA sequences that this protein binds with high affinity is a conserved site within the promoter of its gene. The polypeptide is CCAAT/enhancer-binding protein (slbo) (Drosophila melanogaster (Fruit fly)).